A 69-amino-acid polypeptide reads, in one-letter code: MSFNLRGAVLANVSGNTQDQLQETIVDAIQSGEEKMLPGLGVLFEVIWKNADENEKHEMLETLEQGLKK.

This sequence belongs to the SspI family.

The protein resides in the spore core. This is Small, acid-soluble spore protein I from Bacillus anthracis (strain A0248).